Here is a 210-residue protein sequence, read N- to C-terminus: Large ribosomal subunit protein uL4 (210 aa).

A compositionally biased stretch (polar residues) spans 41 to 52 (QTNARQGTASTK). Positions 41–71 (QTNARQGTASTKTRAEVRGGGRKPWRQKGTG) are disordered. Residues 60–71 (GGRKPWRQKGTG) show a composition bias toward basic residues.

It belongs to the universal ribosomal protein uL4 family. Part of the 50S ribosomal subunit.

Functionally, one of the primary rRNA binding proteins, this protein initially binds near the 5'-end of the 23S rRNA. It is important during the early stages of 50S assembly. It makes multiple contacts with different domains of the 23S rRNA in the assembled 50S subunit and ribosome. Its function is as follows. Forms part of the polypeptide exit tunnel. This is Large ribosomal subunit protein uL4 from Nostoc sp. (strain PCC 7120 / SAG 25.82 / UTEX 2576).